Reading from the N-terminus, the 258-residue chain is Serine protease sp-Eoc49 (258 aa).

The signal sequence occupies residues 1–18 (MVLIRVLANLLVLQLSYA). In terms of domain architecture, Peptidase S1 spans 25 to 249 (VVGGGECNRN…YTDWIQSIIA (225 aa)). An N-linked (GlcNAc...) asparagine glycan is attached at N44. Cysteines 50 and 66 form a disulfide. The active-site Charge relay system is the H65. N-linked (GlcNAc...) asparagine glycans are attached at residues N79 and N103. The active-site Charge relay system is D110. 3 disulfides stabilise this stretch: C142-C210, C174-C189, and C200-C225. N154 carries an N-linked (GlcNAc...) asparagine glycan. S204 serves as the catalytic Charge relay system. A glycan (N-linked (GlcNAc...) asparagine) is linked at N251.

It belongs to the peptidase S1 family. Snake venom subfamily. Monomer. As to expression, expressed by the venom gland.

It is found in the secreted. Its function is as follows. Snake venom serine protease that may act in the hemostasis system of the prey. In Echis ocellatus (Ocellated saw-scaled viper), this protein is Serine protease sp-Eoc49.